Reading from the N-terminus, the 701-residue chain is Polyribonucleotide nucleotidyltransferase (701 aa).

The Mg(2+) site is built by Asp487 and Asp493. The 60-residue stretch at 554-613 (PTMIAMKIDTDKIRDVIGKGGATIRAICEETKASIDIEDDGSIKIFGETKEAADAAKQRI) folds into the KH domain. In terms of domain architecture, S1 motif spans 623–691 (GKIYVGKVER…NRGRIKLSIK (69 aa)).

It belongs to the polyribonucleotide nucleotidyltransferase family. As to quaternary structure, component of the RNA degradosome, which is a multiprotein complex involved in RNA processing and mRNA degradation. Requires Mg(2+) as cofactor.

Its subcellular location is the cytoplasm. The enzyme catalyses RNA(n+1) + phosphate = RNA(n) + a ribonucleoside 5'-diphosphate. Functionally, involved in mRNA degradation. Catalyzes the phosphorolysis of single-stranded polyribonucleotides processively in the 3'- to 5'-direction. The polypeptide is Polyribonucleotide nucleotidyltransferase (Pseudomonas putida (strain ATCC 47054 / DSM 6125 / CFBP 8728 / NCIMB 11950 / KT2440)).